The primary structure comprises 233 residues: Enolase-phosphatase E1 (233 aa).

Asp-6 and Glu-8 together coordinate Mg(2+). Substrate contacts are provided by residues 128–129 and Lys-163; that span reads SS. Mg(2+) is bound at residue Asp-188.

Belongs to the HAD-like hydrolase superfamily. MasA/MtnC family. In terms of assembly, monomer. It depends on Mg(2+) as a cofactor.

The protein resides in the cytoplasm. The protein localises to the nucleus. It catalyses the reaction 5-methylsulfanyl-2,3-dioxopentyl phosphate + H2O = 1,2-dihydroxy-5-(methylsulfanyl)pent-1-en-3-one + phosphate. The protein operates within amino-acid biosynthesis; L-methionine biosynthesis via salvage pathway; L-methionine from S-methyl-5-thio-alpha-D-ribose 1-phosphate: step 3/6. It functions in the pathway amino-acid biosynthesis; L-methionine biosynthesis via salvage pathway; L-methionine from S-methyl-5-thio-alpha-D-ribose 1-phosphate: step 4/6. Bifunctional enzyme that catalyzes the enolization of 2,3-diketo-5-methylthiopentyl-1-phosphate (DK-MTP-1-P) into the intermediate 2-hydroxy-3-keto-5-methylthiopentenyl-1-phosphate (HK-MTPenyl-1-P), which is then dephosphorylated to form the acireductone 1,2-dihydroxy-3-keto-5-methylthiopentene (DHK-MTPene). The protein is Enolase-phosphatase E1 of Yarrowia lipolytica (strain CLIB 122 / E 150) (Yeast).